The sequence spans 174 residues: Translation initiation factor IF-3 (174 aa).

It belongs to the IF-3 family. As to quaternary structure, monomer.

The protein resides in the cytoplasm. IF-3 binds to the 30S ribosomal subunit and shifts the equilibrium between 70S ribosomes and their 50S and 30S subunits in favor of the free subunits, thus enhancing the availability of 30S subunits on which protein synthesis initiation begins. The protein is Translation initiation factor IF-3 of Xanthobacter autotrophicus (strain ATCC BAA-1158 / Py2).